We begin with the raw amino-acid sequence, 278 residues long: MRKTITDIQQMKVRGEPIAMLTAYDATIAALFDAAGVPMLLVGDSLGDNVLGFSSTVPVTIEDMVRHTAAVARGAQSALIVADMPFLTYATLEMAVAAARRLMQEGGAQAVKLEGGQAMVPIVRRLVECGVPVMGHLGYTPQSVHLFGKARVQGRSAAAARRMIEDALALEAAGAFALVLELVPAQLAAAITERLRIPTIGIGAGPHCDGQVQVFTDILGLRDDFKPRHTRRFAELAPLIRSAVAAYVAAVGERSFPTAEHSSRMDEAELREALEGLS.

Mg(2+) contacts are provided by aspartate 44 and aspartate 83. 3-methyl-2-oxobutanoate-binding positions include 44–45 (DS), aspartate 83, and lysine 112. Glutamate 114 serves as a coordination point for Mg(2+). Glutamate 181 acts as the Proton acceptor in catalysis.

The protein belongs to the PanB family. As to quaternary structure, homodecamer; pentamer of dimers. Mg(2+) is required as a cofactor.

It localises to the cytoplasm. It catalyses the reaction 3-methyl-2-oxobutanoate + (6R)-5,10-methylene-5,6,7,8-tetrahydrofolate + H2O = 2-dehydropantoate + (6S)-5,6,7,8-tetrahydrofolate. Its pathway is cofactor biosynthesis; (R)-pantothenate biosynthesis; (R)-pantoate from 3-methyl-2-oxobutanoate: step 1/2. Functionally, catalyzes the reversible reaction in which hydroxymethyl group from 5,10-methylenetetrahydrofolate is transferred onto alpha-ketoisovalerate to form ketopantoate. In Roseiflexus sp. (strain RS-1), this protein is 3-methyl-2-oxobutanoate hydroxymethyltransferase.